Consider the following 297-residue polypeptide: PsbP domain-containing protein 5, chloroplastic (297 aa).

The protein belongs to the PsbP family.

The protein localises to the plastid. Its subcellular location is the chloroplast thylakoid lumen. Involved in strigolactone biosynthesis. The polypeptide is PsbP domain-containing protein 5, chloroplastic (PPD5) (Arabidopsis thaliana (Mouse-ear cress)).